Here is a 326-residue protein sequence, read N- to C-terminus: Beta-ketoacyl-[acyl-carrier-protein] synthase III (326 aa).

Catalysis depends on residues cysteine 115 and histidine 253. The ACP-binding stretch occupies residues glutamine 254–arginine 258. Residue asparagine 283 is part of the active site.

The protein belongs to the thiolase-like superfamily. FabH family. In terms of assembly, homodimer.

The protein localises to the cytoplasm. The catalysed reaction is malonyl-[ACP] + acetyl-CoA + H(+) = 3-oxobutanoyl-[ACP] + CO2 + CoA. Its pathway is lipid metabolism; fatty acid biosynthesis. Functionally, catalyzes the condensation reaction of fatty acid synthesis by the addition to an acyl acceptor of two carbons from malonyl-ACP. Catalyzes the first condensation reaction which initiates fatty acid synthesis and may therefore play a role in governing the total rate of fatty acid production. Possesses both acetoacetyl-ACP synthase and acetyl transacylase activities. Its substrate specificity determines the biosynthesis of branched-chain and/or straight-chain of fatty acids. This is Beta-ketoacyl-[acyl-carrier-protein] synthase III from Bradyrhizobium diazoefficiens (strain JCM 10833 / BCRC 13528 / IAM 13628 / NBRC 14792 / USDA 110).